The following is an 82-amino-acid chain: Splicing factor U2AF 35 kDa subunit (82 aa).

N-acetylalanine is present on alanine 2. Residues 12–40 form a C3H1-type zinc finger; that stretch reads EKDKVNCSFYFKIGACRHGDRCSRLHNKP. At lysine 39 the chain carries N6-methyllysine. The 18-residue stretch at 65-82 folds into the RRM domain; that stretch reads SHCHVSDVEVQEHYDNFF.

This sequence belongs to the splicing factor SR family. In terms of assembly, identified in the spliceosome C complex. Heterodimer with U2AF2. Interacts (via RS domain) with PHF5A (via N-terminus). Interacts with ZRANB2. Interacts with SDE2. Interacts with SF3B1.

The protein resides in the nucleus. It is found in the nucleus speckle. Functionally, plays a critical role in both constitutive and enhancer-dependent splicing by mediating protein-protein interactions and protein-RNA interactions required for accurate 3'-splice site selection. Recruits U2 snRNP to the branch point. Directly mediates interactions between U2AF2 and proteins bound to the enhancers and thus may function as a bridge between U2AF2 and the enhancer complex to recruit it to the adjacent intron. The chain is Splicing factor U2AF 35 kDa subunit (U2AF1) from Sus scrofa (Pig).